The chain runs to 964 residues: Protein translocase subunit SecA (964 aa).

ATP contacts are provided by residues glutamine 86, 104–108 (GEGKT), and aspartate 494. Residues 846 to 964 (ETAESADTIA…YKMCHGQNEA (119 aa)) are disordered. Positions 871-882 (AEGEVEEEDEDT) are enriched in acidic residues. Over residues 887 to 900 (AIAESAAASEAGES) the composition is skewed to low complexity. Cysteine 947, cysteine 949, cysteine 958, and histidine 959 together coordinate Zn(2+).

This sequence belongs to the SecA family. In terms of assembly, monomer and homodimer. Part of the essential Sec protein translocation apparatus which comprises SecA, SecYEG and auxiliary proteins SecDF. Other proteins may also be involved. The cofactor is Zn(2+).

It is found in the cell membrane. It localises to the cytoplasm. The catalysed reaction is ATP + H2O + cellular proteinSide 1 = ADP + phosphate + cellular proteinSide 2.. Its function is as follows. Part of the Sec protein translocase complex. Interacts with the SecYEG preprotein conducting channel. Has a central role in coupling the hydrolysis of ATP to the transfer of proteins into and across the cell membrane, serving as an ATP-driven molecular motor driving the stepwise translocation of polypeptide chains across the membrane. The chain is Protein translocase subunit SecA from Bifidobacterium longum subsp. infantis (strain ATCC 15697 / DSM 20088 / JCM 1222 / NCTC 11817 / S12).